We begin with the raw amino-acid sequence, 240 residues long: Bactofilin BacP (240 aa).

Positions 116 to 240 (DVEPGRLPAE…KKVVVKKKTR (125 aa)) are interacts with PadC. The disordered stretch occupies residues 117 to 240 (VEPGRLPAER…KKVVVKKKTR (124 aa)). Positions 126 to 150 (RPAVVRPTAVTRPTATPARPTIPAA) are enriched in low complexity. Positions 151–173 (RPMPPPPPSRPTPPPPPARPSAP) are enriched in pro residues. Residues 229 to 240 (AKKKVVVKKKTR) show a composition bias toward basic residues.

It belongs to the bactofilin family. As to quaternary structure, interacts with BacN and probably also BacO, the 3 proteins colocalize as an extended structure. Interacts with PadC.

It localises to the cytoplasm. Its subcellular location is the cytoskeleton. Functionally, a non-essential component of the chromosome segregation machinery. Positions the ParA-ParB-parS chromosome segregation machinery within the cell; BacP seems to be the most important bactofilin in this process. Forms a heteropolymeric, subpolar scaffold in the cell; BacP probably forms the core, BacO contributes to position and integrity while BacN does not seem to contribute to assembly. The protein is Bactofilin BacP of Myxococcus xanthus (strain DK1622).